The sequence spans 340 residues: Flavonoid 7-O-methyltransferase 1 (340 aa).

Position 207 (Asp207) interacts with S-adenosyl-L-methionine. Catalysis depends on His245, which acts as the Proton acceptor.

Belongs to the class I-like SAM-binding methyltransferase superfamily. Cation-independent O-methyltransferase family. As to quaternary structure, homodimer. In terms of tissue distribution, expressed in leaves.

It catalyses the reaction (2S)-naringenin + S-adenosyl-L-methionine = (2S)-sakuranetin + S-adenosyl-L-homocysteine + H(+). The catalysed reaction is scutellarein + S-adenosyl-L-methionine = scutellarein 7-methyl ether + S-adenosyl-L-homocysteine. It carries out the reaction apigenin + S-adenosyl-L-methionine = genkwanin + S-adenosyl-L-homocysteine + H(+). The enzyme catalyses luteolin + S-adenosyl-L-methionine = luteolin 7-methyl ether + S-adenosyl-L-homocysteine + H(+). It catalyses the reaction chrysoeriol + S-adenosyl-L-methionine = velutin + S-adenosyl-L-homocysteine. The catalysed reaction is diosmetin + S-adenosyl-L-methionine = luteolin 4',7-dimethyl ether + S-adenosyl-L-homocysteine. It carries out the reaction acacetin + S-adenosyl-L-methionine = apigenin 4',7-dimethyl ether + S-adenosyl-L-homocysteine. The enzyme catalyses scutellarein 4'-methyl ether + S-adenosyl-L-methionine = ladanein + S-adenosyl-L-homocysteine. It participates in flavonoid metabolism. Functionally, flavonoid 7-O-methyltransferase involved in the biosynthesis of polymethoxylated flavonoids natural products such as nevadensin and salvigenin, aroma compounds which contribute to the flavor of sweet basil, and exhibit pharmacological activities such as anti-allergic, anti-oxidant, antibacterial, anti-proliferative, and anti-inflammatory effects. Catalyzes S-adenosylmethionine-dependent regioselective 7-O-methylation of flavonoids; active on various hydroxylated flavonoid substrates, including apigenin (API) and luteolin (LUT), and, with a lower efficiency, scutellarein (SCU), naringenin (NAR), chrysoeriol (CHRYS), diosmetin (DIOS), acacetin (ACA) and scutellarein-7-methyl ether (SCU7Me). The polypeptide is Flavonoid 7-O-methyltransferase 1 (Ocimum basilicum (Sweet basil)).